The sequence spans 405 residues: Eukaryotic initiation factor 4A (405 aa).

Positions 31 to 59 (ECFEALNLEGDLLRGIFAYGFEKPSAIQQ) match the Q motif motif. One can recognise a Helicase ATP-binding domain in the interval 62–232 (IKPILDGYDT…TQFMRDPKRI (171 aa)). Residue 75-82 (AQSGTGKT) coordinates ATP. The DEAD box motif lies at 180 to 183 (DEAD). The 162-residue stretch at 243-404 (GIRQFYVGVE…EMPMGITDIL (162 aa)) folds into the Helicase C-terminal domain.

This sequence belongs to the DEAD box helicase family. eIF4A subfamily. As to quaternary structure, eIF4F is a multi-subunit complex, the composition of which varies with external and internal environmental conditions. It is composed of at least EIF4A, EIF4E and EIF4G.

It carries out the reaction ATP + H2O = ADP + phosphate + H(+). In terms of biological role, ATP-dependent RNA helicase which is a subunit of the eIF4F complex involved in cap recognition and is required for mRNA binding to ribosome. In the current model of translation initiation, eIF4A unwinds RNA secondary structures in the 5'-UTR of mRNAs which is necessary to allow efficient binding of the small ribosomal subunit, and subsequent scanning for the initiator codon. In Cryptosporidium parvum, this protein is Eukaryotic initiation factor 4A (EIF4-A).